A 614-amino-acid chain; its full sequence is Probable Xaa-Pro aminopeptidase P (614 aa).

Residues Asp411, Asp422, Glu520, and Glu534 each coordinate Mn(2+).

Belongs to the peptidase M24B family. The cofactor is Mn(2+).

The enzyme catalyses Release of any N-terminal amino acid, including proline, that is linked to proline, even from a dipeptide or tripeptide.. In terms of biological role, catalyzes the removal of a penultimate prolyl residue from the N-termini of peptides. The polypeptide is Probable Xaa-Pro aminopeptidase P (AMPP) (Sordaria macrospora (strain ATCC MYA-333 / DSM 997 / K(L3346) / K-hell)).